A 417-amino-acid chain; its full sequence is Squamosa promoter-binding-like protein 14 (417 aa).

2 stretches are compositionally biased toward gly residues: residues 1 to 26 (MEMA…GGGG) and 51 to 60 (AGGGGTGSGS). Disordered stretches follow at residues 1 to 32 (MEMA…EHRQ) and 51 to 102 (AGGG…PPPP). Residues 61 to 74 (GSASAAPPSSSSKA) show a composition bias toward low complexity. Gly residues predominate over residues 75–84 (AGGGRGGGGK). The SBP-type zinc-finger motif lies at 101–178 (PPRCQVEGCG…AGHNERRRRP (78 aa)). 7 residues coordinate Zn(2+): Cys-104, Cys-109, Cys-126, His-129, Cys-145, Cys-148, and His-152. Residues 161–177 (KRSCRRRLAGHNERRRR) carry the Bipartite nuclear localization signal motif. Ser-163 carries the post-translational modification Phosphoserine. Cys-164 lines the Zn(2+) pocket. Positions 387–417 (LQGNGPAPAPRIDPGSGSTFDQTSNTMDWSL) are disordered. Polar residues predominate over residues 402–417 (SGSTFDQTSNTMDWSL).

Interacts with PCF1 and PCF2. Interacts with IPI1. Interacts with D53. Interacts with SLR1. Interacts (via C-terminus) with SHI1. Phosphorylated at Ser-163 in response to infection by the fungal pathogen Magnaporthe oryzae. In terms of processing, ubiquitinated by IPI1, which leads to proteasomal degradation. As to expression, expressed in young panicles. Expressed in the shoot apex at both the vegetative and reproductive stages. Highly expressed in the promordia of primary and secondary branches. Highly expressed in young panicles.

It localises to the nucleus. Transcriptional activator that binds to the SBP-box DNA core binding motif 5'-GTAC-3'. Can target the TCP motif 5'-TGGGCC/T-3' through interaction with PCF1 and PCF2. Key regulator of the plant architecture that controls shoot branching and panicle development. Promotes panicle branching. Promotes high grain yield. Binds to the promoters of TB1 and DEP1. Suppresses rice tillering mainly through positive regulation of TB1. Regulates plant height and panicle length through positive regulation of DEP1. Repressed by D53 in strigolactone (SL) signaling. Acts with D53 to mediate the SL-regulated tiller development. Functions as a direct downstream component of D53 in regulating tiller number and SL-induced gene expression. Binds directly to the D53 promoter and plays a critical role in the negative feedback regulation of SL-induced D53 expression. Involved in defense response against pathogens. Phosphorylated at Ser-163 in response to infection by the fungal pathogen Magnaporthe oryzae. Phosphorylation reduces SPL14/IPA1 binding to the GTAC site in the DEP1 promoter and enhances binding to the TGGGCC site in the WRKY45 promoter. Binding to the promoter of the pathogen defense gene WRKY45 activates its expression, leading to enhanced disease resistance. Reduces gibberellin-mediated disease susceptibility by stabilizing SLR1. Possesses transactivation activity in yeast cells. This Oryza sativa subsp. japonica (Rice) protein is Squamosa promoter-binding-like protein 14.